A 249-amino-acid polypeptide reads, in one-letter code: ATP synthase subunit a, chloroplastic (249 aa).

A run of 5 helical transmembrane segments spans residues 40 to 60 (QVLI…VLAI), 97 to 117 (VPFI…GALL), 136 to 156 (INTT…AGLS), 201 to 221 (LVVV…VMFL), and 222 to 242 (GLFT…AYIG).

The protein belongs to the ATPase A chain family. As to quaternary structure, F-type ATPases have 2 components, CF(1) - the catalytic core - and CF(0) - the membrane proton channel. CF(1) has five subunits: alpha(3), beta(3), gamma(1), delta(1), epsilon(1). CF(0) has four main subunits: a, b, b' and c.

The protein localises to the plastid. It is found in the chloroplast thylakoid membrane. Its function is as follows. Key component of the proton channel; it plays a direct role in the translocation of protons across the membrane. This chain is ATP synthase subunit a, chloroplastic, found in Capsella bursa-pastoris (Shepherd's purse).